The following is a 96-amino-acid chain: Co-chaperonin GroES (96 aa).

Belongs to the GroES chaperonin family. Heptamer of 7 subunits arranged in a ring. Interacts with the chaperonin GroEL.

It is found in the cytoplasm. Together with the chaperonin GroEL, plays an essential role in assisting protein folding. The GroEL-GroES system forms a nano-cage that allows encapsulation of the non-native substrate proteins and provides a physical environment optimized to promote and accelerate protein folding. GroES binds to the apical surface of the GroEL ring, thereby capping the opening of the GroEL channel. This Chromohalobacter salexigens (strain ATCC BAA-138 / DSM 3043 / CIP 106854 / NCIMB 13768 / 1H11) protein is Co-chaperonin GroES.